An 87-amino-acid polypeptide reads, in one-letter code: Small ribosomal subunit protein uS15 (87 aa).

Belongs to the universal ribosomal protein uS15 family. As to quaternary structure, part of the 30S ribosomal subunit. Forms a bridge to the 50S subunit in the 70S ribosome, contacting the 23S rRNA.

One of the primary rRNA binding proteins, it binds directly to 16S rRNA where it helps nucleate assembly of the platform of the 30S subunit by binding and bridging several RNA helices of the 16S rRNA. Functionally, forms an intersubunit bridge (bridge B4) with the 23S rRNA of the 50S subunit in the ribosome. The sequence is that of Small ribosomal subunit protein uS15 from Ruminiclostridium cellulolyticum (strain ATCC 35319 / DSM 5812 / JCM 6584 / H10) (Clostridium cellulolyticum).